Here is an 878-residue protein sequence, read N- to C-terminus: Phosphoenolpyruvate carboxylase (878 aa).

Active-site residues include His138 and Lys545.

This sequence belongs to the PEPCase type 1 family. Mg(2+) is required as a cofactor.

It carries out the reaction oxaloacetate + phosphate = phosphoenolpyruvate + hydrogencarbonate. In terms of biological role, forms oxaloacetate, a four-carbon dicarboxylic acid source for the tricarboxylic acid cycle. This chain is Phosphoenolpyruvate carboxylase, found in Shewanella halifaxensis (strain HAW-EB4).